The chain runs to 505 residues: Deoxyguanosinetriphosphate triphosphohydrolase (505 aa).

The HD domain occupies 66–273 (RLTHSMEVQQ…MEAADDISYC (208 aa)).

Belongs to the dGTPase family. Type 1 subfamily. As to quaternary structure, homotetramer. Mg(2+) serves as cofactor.

The catalysed reaction is dGTP + H2O = 2'-deoxyguanosine + triphosphate + H(+). Its function is as follows. dGTPase preferentially hydrolyzes dGTP over the other canonical NTPs. The protein is Deoxyguanosinetriphosphate triphosphohydrolase of Salmonella paratyphi A (strain AKU_12601).